The chain runs to 201 residues: Putative toxin HigB2 (201 aa).

It belongs to the mycobacterial HigB family.

In terms of biological role, putative toxic component of a type II toxin-antitoxin (TA) system. Its cognate antitoxin would be HigA2. In Mycobacterium tuberculosis (strain ATCC 25618 / H37Rv), this protein is Putative toxin HigB2.